The primary structure comprises 1498 residues: DNA-directed RNA polymerase subunit beta' (1498 aa).

The Zn(2+) site is built by Cys-67, Cys-69, Cys-82, and Cys-85. The Mg(2+) site is built by Asp-499, Asp-501, and Asp-503. Cys-867, Cys-943, Cys-950, and Cys-953 together coordinate Zn(2+).

The protein belongs to the RNA polymerase beta' chain family. As to quaternary structure, the RNAP catalytic core consists of 2 alpha, 1 beta, 1 beta' and 1 omega subunit. When a sigma factor is associated with the core the holoenzyme is formed, which can initiate transcription. Mg(2+) serves as cofactor. The cofactor is Zn(2+).

The catalysed reaction is RNA(n) + a ribonucleoside 5'-triphosphate = RNA(n+1) + diphosphate. In terms of biological role, DNA-dependent RNA polymerase catalyzes the transcription of DNA into RNA using the four ribonucleoside triphosphates as substrates. This Chlorobium phaeobacteroides (strain BS1) protein is DNA-directed RNA polymerase subunit beta'.